Consider the following 107-residue polypeptide: Proteinase inhibitor I-A (107 aa).

Positions M1–A22 are cleaved as a signal peptide. Positions R23–Q36 are excised as a propeptide.

The protein belongs to the protease inhibitor I13 (potato type I serine protease inhibitor) family.

It localises to the secreted. This is Proteinase inhibitor I-A (TIMPB) from Nicotiana tabacum (Common tobacco).